The following is a 476-amino-acid chain: Probable secreted beta-glucosidase SIM1 (476 aa).

The N-terminal stretch at 1-19 (MKFSTAVTTLISSGAIVSA) is a signal peptide. The span at 111-203 (ATASTSQGAS…SSSSSSSGSG (93 aa)) shows a compositional bias: low complexity. The disordered stretch occupies residues 111–214 (ATASTSQGAS…IYGDLADFSG (104 aa)). N-linked (GlcNAc...) asparagine glycosylation occurs at Asn-423.

It belongs to the SUN family.

It localises to the secreted. The protein resides in the cell wall. Its function is as follows. Involved in the remodeling of the cell wall during the various phases of yeast culture development and under various environmental conditions. Required for the maintenance of the CLB5 kinase activity. This is Probable secreted beta-glucosidase SIM1 (SIM1) from Saccharomyces cerevisiae (strain ATCC 204508 / S288c) (Baker's yeast).